The sequence spans 140 residues: Large ribosomal subunit protein uL16 (140 aa).

Belongs to the universal ribosomal protein uL16 family. As to quaternary structure, part of the 50S ribosomal subunit.

Binds 23S rRNA and is also seen to make contacts with the A and possibly P site tRNAs. This Onion yellows phytoplasma (strain OY-M) protein is Large ribosomal subunit protein uL16.